A 385-amino-acid chain; its full sequence is Digeranylgeranylglycerophospholipid reductase 2 (385 aa).

Residues A13, E32, C43, A44, G46, R95, A119, D273, G285, and I286 each coordinate FAD.

It belongs to the geranylgeranyl reductase family. DGGGPL reductase subfamily. Requires FAD as cofactor.

It catalyses the reaction a 2,3-bis-O-phytanyl-sn-glycerol 1-phospholipid + 8 A = a 2,3-bis-O-(geranylgeranyl)-sn-glycerol 1-phospholipid + 8 AH2. It carries out the reaction 2,3-bis-O-(phytanyl)-sn-glycerol 1-phosphate + 8 A = 2,3-bis-O-(geranylgeranyl)-sn-glycerol 1-phosphate + 8 AH2. The catalysed reaction is CDP-2,3-bis-O-(geranylgeranyl)-sn-glycerol + 8 AH2 = CDP-2,3-bis-O-(phytanyl)-sn-glycerol + 8 A. The enzyme catalyses archaetidylserine + 8 AH2 = 2,3-bis-O-phytanyl-sn-glycero-3-phospho-L-serine + 8 A. It participates in membrane lipid metabolism; glycerophospholipid metabolism. Is involved in the reduction of 2,3-digeranylgeranylglycerophospholipids (unsaturated archaeols) into 2,3-diphytanylglycerophospholipids (saturated archaeols) in the biosynthesis of archaeal membrane lipids. Catalyzes the formation of archaetidic acid (2,3-di-O-phytanyl-sn-glyceryl phosphate) from 2,3-di-O-geranylgeranylglyceryl phosphate (DGGGP) via the hydrogenation of each double bond of the isoprenoid chains. Is also probably able to reduce double bonds of geranyl groups in CDP-2,3-bis-O-(geranylgeranyl)-sn-glycerol and archaetidylserine, thus acting at various stages in the biosynthesis of archaeal membrane lipids. This Methanothermobacter thermautotrophicus (strain ATCC 29096 / DSM 1053 / JCM 10044 / NBRC 100330 / Delta H) (Methanobacterium thermoautotrophicum) protein is Digeranylgeranylglycerophospholipid reductase 2.